The primary structure comprises 246 residues: Adenosylcobinamide-GDP ribazoletransferase (246 aa).

Helical transmembrane passes span 34–54 (IVTF…VALL), 59–79 (CGVP…TGGF), 113–133 (GGLA…ELLL), 136–156 (IHPI…AALL), 181–201 (TLVT…LQGL), and 203–223 (AALI…RTLG).

The protein belongs to the CobS family. It depends on Mg(2+) as a cofactor.

The protein localises to the cell inner membrane. It catalyses the reaction alpha-ribazole + adenosylcob(III)inamide-GDP = adenosylcob(III)alamin + GMP + H(+). The enzyme catalyses alpha-ribazole 5'-phosphate + adenosylcob(III)inamide-GDP = adenosylcob(III)alamin 5'-phosphate + GMP + H(+). The protein operates within cofactor biosynthesis; adenosylcobalamin biosynthesis; adenosylcobalamin from cob(II)yrinate a,c-diamide: step 7/7. Joins adenosylcobinamide-GDP and alpha-ribazole to generate adenosylcobalamin (Ado-cobalamin). Also synthesizes adenosylcobalamin 5'-phosphate from adenosylcobinamide-GDP and alpha-ribazole 5'-phosphate. This chain is Adenosylcobinamide-GDP ribazoletransferase, found in Klebsiella pneumoniae subsp. pneumoniae (strain ATCC 700721 / MGH 78578).